We begin with the raw amino-acid sequence, 633 residues long: Kelch repeat and BTB domain-containing protein 11 (633 aa).

Positions 1–118 (MENSVAPFVL…EDPPSRHEHA (118 aa)) are disordered. Positions 35 to 60 (STAQTPCSLSASLCFSSGDDSPPQSR) are enriched in polar residues. Over residues 61–73 (ASAAEGSEASPPS) the composition is skewed to low complexity. Residues S70, S73, S92, S95, S107, and S113 each carry the phosphoserine modification. A BTB domain is found at 146–206 (PDLVIEVAGR…AYSGRMAGVR (61 aa)). Kelch repeat units lie at residues 317 to 365 (RPQS…VLFN), 366 to 418 (YLFL…ALDG), 419 to 463 (HLYA…TCNG), and 465 to 506 (IYVS…ALDG).

This Mus musculus (Mouse) protein is Kelch repeat and BTB domain-containing protein 11 (Kbtbd11).